An 87-amino-acid chain; its full sequence is Acyl-CoA-binding protein (87 aa).

The residue at position 2 (Ser-2) is an N-acetylserine. Residues 2–87 (SQAEFDKAAE…VEELKKKYGI (86 aa)) form the ACB domain. N6-acetyllysine; alternate is present on Lys-8. Residue Lys-8 is modified to N6-succinyllysine; alternate. Lys-14 lines the an acyl-CoA pocket. Lys-17 is modified (N6-succinyllysine). Position 19 is an N6-acetyllysine (Lys-19). A Phosphotyrosine modification is found at Tyr-29. Residues 29–33 (YSHYK), Lys-51, Lys-55, and Tyr-74 each bind an acyl-CoA. Position 51 is an N6-acetyllysine (Lys-51). The residue at position 55 (Lys-55) is an N6-acetyllysine; alternate. Position 55 is an N6-succinyllysine; alternate (Lys-55). The residue at position 55 (Lys-55) is an N6-(2-hydroxyisobutyryl)lysine; alternate. Lys-55 is subject to N6-malonyllysine; alternate. Lys-77 is modified (N6-acetyllysine; alternate). At Lys-77 the chain carries N6-succinyllysine; alternate.

Belongs to the ACBP family. In terms of assembly, monomer.

The protein resides in the endoplasmic reticulum. It localises to the golgi apparatus. In terms of biological role, binds medium- and long-chain acyl-CoA esters with very high affinity and may function as an intracellular carrier of acyl-CoA esters. This Chaetophractus villosus (South American armadillo) protein is Acyl-CoA-binding protein (DBI).